The following is a 1020-amino-acid chain: C2 and GRAM domain-containing protein At1g03370 (1020 aa).

The C2 1 domain maps to 1-102 (MKLQVRVVEA…ENQSLGTVWY (102 aa)). Asp-17, Asp-23, Asp-69, Asp-71, and Asp-77 together coordinate Ca(2+). 2 stretches are compositionally biased toward polar residues: residues 134–144 (TSSGDQTSASR) and 158–172 (TCASPSRSDDASSIP). Residues 134 to 172 (TSSGDQTSASRSPDLRLESPIDPSTCASPSRSDDASSIP) are disordered. The VASt 1 domain maps to 249–421 (SGGVVVDQLF…LLAQSVKPVD (173 aa)). The helical transmembrane segment at 454–474 (FTVLSTFLIGIYVFVHIVFAI) threads the bilayer. Residues 517 to 635 (QARKQKGSDH…NISDLADVWV (119 aa)) enclose the C2 2 domain. Positions 551, 557, 604, 605, and 606 each coordinate Ca(2+). The 64-residue stretch at 689–752 (AFQKLFGLPQ…LWEDIEEIQV (64 aa)) folds into the GRAM domain. The 163-residue stretch at 848–1010 (RFSEVFSLTL…MTFGFLEKEY (163 aa)) folds into the VASt 2 domain.

It depends on Ca(2+) as a cofactor.

The protein resides in the membrane. The sequence is that of C2 and GRAM domain-containing protein At1g03370 from Arabidopsis thaliana (Mouse-ear cress).